The sequence spans 141 residues: uncharacterized protein (141 aa).

Residues 1–61 (IRLLHSLTPP…PPPPPPPRRA (61 aa)) are disordered. The span at 8–58 (TPPPPPPPPPPPPPPPPPPPPPPPPPPPPPPPPPPPPPPPPPPPPPPPPPP) shows a compositional bias: pro residues. The segment at residues 98 to 116 (KRLLVAYPVRHFLSAACQF) is a DNA-binding region (H-T-H motif).

This is an uncharacterized protein from Owenia fusiformis (Polychaete worm).